The chain runs to 496 residues: Lysine--tRNA ligase (496 aa).

2 residues coordinate Mg(2+): Glu409 and Glu416.

This sequence belongs to the class-II aminoacyl-tRNA synthetase family. As to quaternary structure, homodimer. The cofactor is Mg(2+).

Its subcellular location is the cytoplasm. The catalysed reaction is tRNA(Lys) + L-lysine + ATP = L-lysyl-tRNA(Lys) + AMP + diphosphate. In Streptococcus gordonii (strain Challis / ATCC 35105 / BCRC 15272 / CH1 / DL1 / V288), this protein is Lysine--tRNA ligase.